The following is a 117-amino-acid chain: Large ribosomal subunit protein uL18 (117 aa).

It belongs to the universal ribosomal protein uL18 family. Part of the 50S ribosomal subunit; part of the 5S rRNA/L5/L18/L25 subcomplex. Contacts the 5S and 23S rRNAs.

Functionally, this is one of the proteins that bind and probably mediate the attachment of the 5S RNA into the large ribosomal subunit, where it forms part of the central protuberance. This chain is Large ribosomal subunit protein uL18, found in Onion yellows phytoplasma (strain OY-M).